The sequence spans 280 residues: Probable endonuclease lcl3 (280 aa).

The helical transmembrane segment at 50 to 67 threads the bilayer; sequence TLIPTLILTTAILSAARF. The TNase-like domain occupies 89-257; sequence RSIYGKVTSV…KLKGNGMWKG (169 aa). The active site involves R140. D145 is a Ca(2+) binding site. Residues E148 and R188 contribute to the active site.

It belongs to the LCL3 family.

It localises to the mitochondrion. The protein resides in the membrane. In Emericella nidulans (strain FGSC A4 / ATCC 38163 / CBS 112.46 / NRRL 194 / M139) (Aspergillus nidulans), this protein is Probable endonuclease lcl3 (lcl3).